The chain runs to 205 residues: Dephospho-CoA kinase (205 aa).

A DPCK domain is found at 4-203; sequence KIGITGGIGS…QKIHYLCSAK (200 aa). 12 to 17 is an ATP binding site; the sequence is GSGKSV.

The protein belongs to the CoaE family.

The protein localises to the cytoplasm. The catalysed reaction is 3'-dephospho-CoA + ATP = ADP + CoA + H(+). The protein operates within cofactor biosynthesis; coenzyme A biosynthesis; CoA from (R)-pantothenate: step 5/5. Catalyzes the phosphorylation of the 3'-hydroxyl group of dephosphocoenzyme A to form coenzyme A. The chain is Dephospho-CoA kinase from Bacteroides fragilis (strain YCH46).